The primary structure comprises 356 residues: Heat-inducible transcription repressor HrcA (356 aa).

This sequence belongs to the HrcA family.

Negative regulator of class I heat shock genes (grpE-dnaK-dnaJ and groELS operons). Prevents heat-shock induction of these operons. The sequence is that of Heat-inducible transcription repressor HrcA from Chlorobaculum tepidum (strain ATCC 49652 / DSM 12025 / NBRC 103806 / TLS) (Chlorobium tepidum).